We begin with the raw amino-acid sequence, 322 residues long: Aspartate carbamoyltransferase catalytic subunit (322 aa).

Carbamoyl phosphate is bound by residues R65 and T66. K93 contributes to the L-aspartate binding site. Carbamoyl phosphate-binding residues include R115, H143, and Q146. Positions 176 and 230 each coordinate L-aspartate. Carbamoyl phosphate-binding residues include G271 and P272.

It belongs to the aspartate/ornithine carbamoyltransferase superfamily. ATCase family. In terms of assembly, heterododecamer (2C3:3R2) of six catalytic PyrB chains organized as two trimers (C3), and six regulatory PyrI chains organized as three dimers (R2).

It carries out the reaction carbamoyl phosphate + L-aspartate = N-carbamoyl-L-aspartate + phosphate + H(+). It functions in the pathway pyrimidine metabolism; UMP biosynthesis via de novo pathway; (S)-dihydroorotate from bicarbonate: step 2/3. Its function is as follows. Catalyzes the condensation of carbamoyl phosphate and aspartate to form carbamoyl aspartate and inorganic phosphate, the committed step in the de novo pyrimidine nucleotide biosynthesis pathway. The protein is Aspartate carbamoyltransferase catalytic subunit of Brucella abortus (strain S19).